Here is a 410-residue protein sequence, read N- to C-terminus: Exodeoxyribonuclease 7 large subunit (410 aa).

The protein belongs to the XseA family. In terms of assembly, heterooligomer composed of large and small subunits.

Its subcellular location is the cytoplasm. It carries out the reaction Exonucleolytic cleavage in either 5'- to 3'- or 3'- to 5'-direction to yield nucleoside 5'-phosphates.. Bidirectionally degrades single-stranded DNA into large acid-insoluble oligonucleotides, which are then degraded further into small acid-soluble oligonucleotides. The chain is Exodeoxyribonuclease 7 large subunit from Alkaliphilus metalliredigens (strain QYMF).